Consider the following 300-residue polypeptide: 4-hydroxy-tetrahydrodipicolinate synthase (300 aa).

Threonine 49 lines the pyruvate pocket. Tyrosine 137 serves as the catalytic Proton donor/acceptor. The active-site Schiff-base intermediate with substrate is lysine 165. Isoleucine 207 lines the pyruvate pocket.

This sequence belongs to the DapA family. As to quaternary structure, homotetramer; dimer of dimers.

It localises to the cytoplasm. It carries out the reaction L-aspartate 4-semialdehyde + pyruvate = (2S,4S)-4-hydroxy-2,3,4,5-tetrahydrodipicolinate + H2O + H(+). It functions in the pathway amino-acid biosynthesis; L-lysine biosynthesis via DAP pathway; (S)-tetrahydrodipicolinate from L-aspartate: step 3/4. In terms of biological role, catalyzes the condensation of (S)-aspartate-beta-semialdehyde [(S)-ASA] and pyruvate to 4-hydroxy-tetrahydrodipicolinate (HTPA). In Nitrosospira multiformis (strain ATCC 25196 / NCIMB 11849 / C 71), this protein is 4-hydroxy-tetrahydrodipicolinate synthase.